Reading from the N-terminus, the 312-residue chain is Putative endonuclease 4 (312 aa).

Residues His84, His127, Glu166, Asp202, His205, His239, Asp252, His254, and Glu284 each contribute to the Zn(2+) site.

Belongs to the AP endonuclease 2 family. Zn(2+) is required as a cofactor.

It catalyses the reaction Endonucleolytic cleavage to 5'-phosphooligonucleotide end-products.. Its function is as follows. Endonuclease IV plays a role in DNA repair. It cleaves phosphodiester bonds at apurinic or apyrimidinic sites (AP sites) to produce new 5'-ends that are base-free deoxyribose 5-phosphate residues. This is Putative endonuclease 4 from Acanthamoeba polyphaga (Amoeba).